The chain runs to 484 residues: uncharacterized protein (484 aa).

The region spanning 14–82 is the HTH gntR-type domain; it reads VPLHRQIEQY…KGGGTKVVNS (69 aa). A DNA-binding region (H-T-H motif) is located at residues 42–61; sequence QRTLADMFQVNRSTVTAAID. N6-(pyridoxal phosphate)lysine is present on Lys-327.

In the C-terminal section; belongs to the class-I pyridoxal-phosphate-dependent aminotransferase family. Requires pyridoxal 5'-phosphate as cofactor.

This is an uncharacterized protein from Bacillus subtilis (strain 168).